The primary structure comprises 275 residues: MNALTPPRDCLERSQGHAQVTLARVLGAVRLRDLAQRGSAKAFLPRVDGPVPEIVFLNTSGGLTGGDRLSYRLEVGEGCRAVATTQTAERAYAAGRGVAQVRVAHEVGAGGWLDWLPQETILFEDSALDRRTEIVLGPGAGCLMVESVVLGRAAMGETLSRLAFRDLRQITRGGRPVLVEPLALDDRALAAAAGAAVLGGLRALATLALVGPGAEDALGPARAVLDEPGVEAAASAFDGKLLVRMLALDGWPLRRQVARVLGVLRGRALPRVWQD.

The protein belongs to the UreD family. In terms of assembly, ureD, UreF and UreG form a complex that acts as a GTP-hydrolysis-dependent molecular chaperone, activating the urease apoprotein by helping to assemble the nickel containing metallocenter of UreC. The UreE protein probably delivers the nickel.

Its subcellular location is the cytoplasm. Its function is as follows. Required for maturation of urease via the functional incorporation of the urease nickel metallocenter. This is Urease accessory protein UreD from Cereibacter sphaeroides (strain ATCC 17025 / ATH 2.4.3) (Rhodobacter sphaeroides).